Consider the following 557-residue polypeptide: Dihydroxy-acid dehydratase (557 aa).

Cys50 is a binding site for [2Fe-2S] cluster. Asp82 contacts Mg(2+). Cys123 is a binding site for [2Fe-2S] cluster. 2 residues coordinate Mg(2+): Asp124 and Lys125. Lys125 carries the N6-carboxylysine modification. Cys195 is a [2Fe-2S] cluster binding site. Glu447 serves as a coordination point for Mg(2+). The active-site Proton acceptor is the Ser473.

This sequence belongs to the IlvD/Edd family. As to quaternary structure, homodimer. [2Fe-2S] cluster is required as a cofactor. The cofactor is Mg(2+).

The enzyme catalyses (2R)-2,3-dihydroxy-3-methylbutanoate = 3-methyl-2-oxobutanoate + H2O. The catalysed reaction is (2R,3R)-2,3-dihydroxy-3-methylpentanoate = (S)-3-methyl-2-oxopentanoate + H2O. Its pathway is amino-acid biosynthesis; L-isoleucine biosynthesis; L-isoleucine from 2-oxobutanoate: step 3/4. The protein operates within amino-acid biosynthesis; L-valine biosynthesis; L-valine from pyruvate: step 3/4. Functions in the biosynthesis of branched-chain amino acids. Catalyzes the dehydration of (2R,3R)-2,3-dihydroxy-3-methylpentanoate (2,3-dihydroxy-3-methylvalerate) into 2-oxo-3-methylpentanoate (2-oxo-3-methylvalerate) and of (2R)-2,3-dihydroxy-3-methylbutanoate (2,3-dihydroxyisovalerate) into 2-oxo-3-methylbutanoate (2-oxoisovalerate), the penultimate precursor to L-isoleucine and L-valine, respectively. In Nitrosospira multiformis (strain ATCC 25196 / NCIMB 11849 / C 71), this protein is Dihydroxy-acid dehydratase.